The primary structure comprises 123 residues: Large ribosomal subunit protein uL18 (123 aa).

The protein belongs to the universal ribosomal protein uL18 family. Part of the 50S ribosomal subunit; part of the 5S rRNA/L5/L18/L25 subcomplex. Contacts the 5S and 23S rRNAs.

Its function is as follows. This is one of the proteins that bind and probably mediate the attachment of the 5S RNA into the large ribosomal subunit, where it forms part of the central protuberance. This chain is Large ribosomal subunit protein uL18, found in Wolbachia pipientis wMel.